Consider the following 321-residue polypeptide: Probable E3 ubiquitin-protein ligase BAH1-like 1 (321 aa).

The SPX domain occupies 1–149 (MKFAKKYEKY…YSKQGQEFKA (149 aa)). The RING-type zinc-finger motif lies at 217-266 (CSICLDTVFDPVALSCGHIYCYLCSCSAASVTIVDGLKSAERKSKCPLCR).

It belongs to the RING-type zinc finger family.

The catalysed reaction is S-ubiquitinyl-[E2 ubiquitin-conjugating enzyme]-L-cysteine + [acceptor protein]-L-lysine = [E2 ubiquitin-conjugating enzyme]-L-cysteine + N(6)-ubiquitinyl-[acceptor protein]-L-lysine.. It participates in protein modification; protein ubiquitination. The polypeptide is Probable E3 ubiquitin-protein ligase BAH1-like 1 (Oryza sativa subsp. indica (Rice)).